A 225-amino-acid chain; its full sequence is MGKYLRSSCKQQQQPSSPAAVASVAAAAVSSYSYLTLRSGRRVPAAAAAAGGSACRRRHRRGGRRGCAKNGAGSARACGARSPTSSASSGQRRRCEAVECSHGGGRAELSRSPPLGNSVVVVSGDVVSGERKSLKPNSCSREVAAEHAGEHKHNPAAAAAAGRRPPLSPPEAEIEAFFAAAELAERRRFAEKYNYDIALDRPLQGRYEWEPTVPNFDVAKDVTDM.

Disordered stretches follow at residues 47–94 (AAAA…QRRR) and 130–169 (ERKSLKPNSCSREVAAEHAGEHKHNPAAAAAAGRRPPLSP). The segment covering 55–67 (CRRRHRRGGRRGC) has biased composition (basic residues). The segment covering 71-82 (GAGSARACGARS) has biased composition (low complexity). The span at 143–153 (VAAEHAGEHKH) shows a compositional bias: basic and acidic residues.

Belongs to the CDI family. ICK/KRP subfamily.

This Oryza sativa subsp. japonica (Rice) protein is Cyclin-dependent kinase inhibitor 3 (KRP3).